A 196-amino-acid chain; its full sequence is UMP-CMP kinase (196 aa).

13 to 18 (GAGKGT) contacts ATP. A Phosphoserine modification is found at Ser-33. Residues 33–63 (SAGELLRDERKNPDSQYGELIEKYIKEGKIV) are NMP. Residue Arg-39 participates in a ribonucleoside 5'-phosphate binding. 2 positions are modified to N6-acetyllysine: Lys-43 and Lys-55. 61 to 63 (KIV) is a binding site for a ribonucleoside 5'-phosphate. Lys-73 participates in a covalent cross-link: Glycyl lysine isopeptide (Lys-Gly) (interchain with G-Cter in SUMO2). Residue 93–96 (GFPR) coordinates a ribonucleoside 5'-phosphate. Residue Asn-100 coordinates CMP. N6-succinyllysine is present on Lys-106. Positions 133–143 (ERGKSSGRSDD) are LID. ATP is bound at residue Arg-134. A ribonucleoside 5'-phosphate is bound by residues Arg-140 and Arg-151. Lys-179 is an ATP binding site. Phosphoserine is present on Ser-180.

The protein belongs to the adenylate kinase family. UMP-CMP kinase subfamily. As to quaternary structure, monomer. The cofactor is Mg(2+).

It localises to the nucleus. The protein resides in the cytoplasm. The enzyme catalyses CMP + ATP = CDP + ADP. It catalyses the reaction dCMP + ATP = dCDP + ADP. The catalysed reaction is UMP + ATP = UDP + ADP. It carries out the reaction a 2'-deoxyribonucleoside 5'-diphosphate + ATP = a 2'-deoxyribonucleoside 5'-triphosphate + ADP. The enzyme catalyses a ribonucleoside 5'-diphosphate + ATP = a ribonucleoside 5'-triphosphate + ADP. Catalyzes the phosphorylation of pyrimidine nucleoside monophosphates at the expense of ATP. Plays an important role in de novo pyrimidine nucleotide biosynthesis. Has preference for UMP and CMP as phosphate acceptors. Also displays broad nucleoside diphosphate kinase activity. This is UMP-CMP kinase (Cmpk1) from Mus musculus (Mouse).